Reading from the N-terminus, the 331-residue chain is Polysaccharide lyase (331 aa).

The signal sequence occupies residues 1 to 22 (MSLPLRLALLPTLLASASAFAA). A lipid anchor (N-palmitoyl cysteine) is attached at cysteine 23. The S-diacylglycerol cysteine moiety is linked to residue cysteine 23.

Belongs to the polysaccharide lyase 5 family.

It is found in the cell outer membrane. The catalysed reaction is Eliminative cleavage of alginate to give oligosaccharides with 4-deoxy-alpha-L-erythro-hex-4-enuronosyl groups at their non-reducing ends and beta-D-mannuronate at their reducing end.. It catalyses the reaction [hyaluronan](n) = n 3-(4-deoxy-beta-D-gluc-4-enuronosyl)-N-acetyl-D-glucosamine + H2O. The enzyme catalyses Eliminative cleavage of (1-&gt;4)-beta-D-glucuronans to give oligosaccharides with 4-deoxy-beta-D-gluc-4-enuronosyl groups at their non-reducing ends. Complete degradation of glucuronans results in the formation of tetrasaccharides.. Is inhibited by mono- and divalent cations as well as L-ascorbic acid 6-hexadecanoate. Polysaccharide lyase that catalyzes the depolymerization of several anionic polysaccharides via a beta-elimination mechanism. Exhibits broad substrate specificity, catalyzing the degradation of not only alginate and poly-beta-D-mannuronate (poly-ManA), but poly-beta-D-glucuronate (poly-GlcA or poly-GlcUA) and hyaluronate (HA) as well. The oligosaccharide products formed by enzymatic cleavage are comprised mainly of disaccharides, with a lower abundance of trimers and pentamers. Is not active on poly-D-galacturonate, heparin and heparin sulfate. This chain is Polysaccharide lyase, found in Stenotrophomonas maltophilia (strain K279a).